The primary structure comprises 304 residues: Recombination-associated protein RdgC (304 aa).

Belongs to the RdgC family.

It localises to the cytoplasm. Its subcellular location is the nucleoid. May be involved in recombination. The chain is Recombination-associated protein RdgC from Shewanella oneidensis (strain ATCC 700550 / JCM 31522 / CIP 106686 / LMG 19005 / NCIMB 14063 / MR-1).